A 116-amino-acid chain; its full sequence is U3-theraphotoxin-Lsp1a (116 aa).

The N-terminal stretch at 1–17 (MKLSTFIIMISLAVALA) is a signal peptide. A propeptide spanning residues 18 to 50 (TWPSEHIEGSDSETKLNVELGPYALADRAEKGK) is cleaved from the precursor.

The protein belongs to the neurotoxin 25 family. F7 subfamily. Post-translationally, contains 3 disulfide bonds. Expressed by the venom gland.

Its subcellular location is the secreted. This is U3-theraphotoxin-Lsp1a from Lasiodora sp. (strain IBSP 8539) (Brazilian salmon pink birdeater).